The primary structure comprises 358 residues: Alanine racemase (358 aa).

Residue lysine 35 is the Proton acceptor; specific for D-alanine of the active site. Lysine 35 carries the post-translational modification N6-(pyridoxal phosphate)lysine. A substrate-binding site is contributed by arginine 130. Catalysis depends on tyrosine 255, which acts as the Proton acceptor; specific for L-alanine. Methionine 303 is a substrate binding site.

This sequence belongs to the alanine racemase family. Requires pyridoxal 5'-phosphate as cofactor.

It carries out the reaction L-alanine = D-alanine. It participates in amino-acid biosynthesis; D-alanine biosynthesis; D-alanine from L-alanine: step 1/1. Catalyzes the interconversion of L-alanine and D-alanine. May also act on other amino acids. This Shewanella sp. (strain W3-18-1) protein is Alanine racemase (alr).